A 567-amino-acid polypeptide reads, in one-letter code: Lipase maturation factor 1 (567 aa).

Residues 1–39 (MRPDSPTMAAPAESLRRRKTGYSDPEPESPPAPGRGPAG) are disordered. Residues 1–49 (MRPDSPTMAAPAESLRRRKTGYSDPEPESPPAPGRGPAGSPAHLHTGTF) are Cytoplasmic-facing. A helical membrane pass occupies residues 50–72 (WLTRIVLLKALAFVYFVAFLVAF). The Lumenal segment spans residues 73 to 127 (HQNKQLIGDRGLLPCRVFLKNFQQYFQDRTSWEVFSYMPTILWLMDWSDMNSNLD). Residues 128–151 (LLALLGLGISSFVLITGCANMLLM) traverse the membrane as a helical segment. Over 152–207 (AALWGLYMSLVNVGHVWYSFGWESQLLETGFLGIFLCPLWTLSRLPQHTPTSRIVL) the chain is Cytoplasmic. A helical membrane pass occupies residues 208-221 (WGFRWLIFRIMLGA). The Lumenal portion of the chain corresponds to 222 to 292 (GLIKIRGDRC…LGRRACIIHG (71 aa)). A helical transmembrane segment spans residues 293 to 321 (VLQILFQAVLIVSGNLSFLNWLTMVPSLA). Over 322–367 (CFDDATLGFLFPSGPGSLKDRVLQMQRDIRGARPEPRFGSVVRRAA) the chain is Cytoplasmic. A helical membrane pass occupies residues 368 to 388 (NVSLGVLLAWLSVPVVLNLLS). Over 389-567 (SRQVMNTHFN…DRGWPLPGPL (179 aa)) the chain is Lumenal.

Belongs to the lipase maturation factor family. As to quaternary structure, interacts with LPL and SEL1L.

It localises to the endoplasmic reticulum membrane. Its function is as follows. Involved in the maturation of specific proteins in the endoplasmic reticulum. Required for maturation and transport of active lipoprotein lipase (LPL) through the secretory pathway. Each LMF1 molecule chaperones 50 or more molecules of LPL. In Homo sapiens (Human), this protein is Lipase maturation factor 1 (LMF1).